The sequence spans 346 residues: Acetylserotonin O-methyltransferase (346 aa).

Residues tyrosine 148, tryptophan 165, aspartate 211, 236–238 (GDF), and lysine 253 each bind S-adenosyl-L-methionine. Histidine 256 serves as the catalytic Proton donor/acceptor. Substrate contacts are provided by aspartate 257, asparagine 303, and glutamine 307.

It belongs to the class I-like SAM-binding methyltransferase superfamily. Cation-independent O-methyltransferase family. In terms of assembly, homodimer. Expressed in pineal gland and retina.

The catalysed reaction is N-acetylserotonin + S-adenosyl-L-methionine = melatonin + S-adenosyl-L-homocysteine + H(+). The protein operates within aromatic compound metabolism; melatonin biosynthesis; melatonin from serotonin: step 1/2. Catalyzes the transfer of a methyl group onto N-acetylserotonin, producing melatonin (N-acetyl-5-methoxytryptamine). This is Acetylserotonin O-methyltransferase (ASMT) from Gallus gallus (Chicken).